Consider the following 188-residue polypeptide: Peptide methionine sulfoxide reductase MsrA (188 aa).

Residues 1–25 (MEGNEKAEQKNATSEESTDIFENPG) are disordered. The active site involves Cys-37.

It belongs to the MsrA Met sulfoxide reductase family.

The catalysed reaction is L-methionyl-[protein] + [thioredoxin]-disulfide + H2O = L-methionyl-(S)-S-oxide-[protein] + [thioredoxin]-dithiol. The enzyme catalyses [thioredoxin]-disulfide + L-methionine + H2O = L-methionine (S)-S-oxide + [thioredoxin]-dithiol. Its function is as follows. Has an important function as a repair enzyme for proteins that have been inactivated by oxidation. Catalyzes the reversible oxidation-reduction of methionine sulfoxide in proteins to methionine. In Methanosarcina acetivorans (strain ATCC 35395 / DSM 2834 / JCM 12185 / C2A), this protein is Peptide methionine sulfoxide reductase MsrA.